The primary structure comprises 1135 residues: Nonribosomal peptide synthetase 9 (1135 aa).

A condensation 1 region spans residues 23-77; that stretch reads TKQITTATYIKLAWAVVISCNTGSNDTVFGITVNGRGAPIDGAGEMTGATIATIP. The tract at residues 177–562 is adenylation; sequence SYAELIRSAN…RRIDEIQEAT (386 aa). The tract at residues 485–507 is disordered; the sequence is GPSPPVGRSSSNRAGSGRCAMGS. A compositionally biased stretch (low complexity) spans 491–502; that stretch reads GRSSSNRAGSGR. The Carrier domain occupies 672 to 748; sequence APSNRVEQDL…AIANKIGDVQ (77 aa). O-(pantetheine 4'-phosphoryl)serine is present on Ser-709. Residues 746 to 999 form a condensation 2 region; the sequence is DVQRAAIKLV…TTLWPVVAQV (254 aa).

This sequence belongs to the NRP synthetase family.

Its function is as follows. Nonribosomal peptide synthesis (NRPS) is a key mechanism responsible for the biosynthesis of bioactive metabolites which are potentially contributing to organismal virulence. The sequence is that of Nonribosomal peptide synthetase 9 (NRPS9) from Aspergillus fumigatus (strain ATCC MYA-4609 / CBS 101355 / FGSC A1100 / Af293) (Neosartorya fumigata).